The primary structure comprises 299 residues: Putative syntaxin-2 (299 aa).

Residues 1 to 270 (MRDRLNEFQS…SAMRKKICVA (270 aa)) are Cytoplasmic-facing. The stretch at 112–146 (EKRMRQNQLELLKDNLNKLINLFNETHQDYKSRVS) forms a coiled coil. The 63-residue stretch at 193-255 (YEDVKKRHGE…KQGSANVKTA (63 aa)) folds into the t-SNARE coiled-coil homology domain. A helical; Anchor for type IV membrane protein transmembrane segment spans residues 271 to 291 (AILITILLILIIVAIILAVVL). Residues 292 to 299 (SRGNNNNK) are Extracellular-facing.

This sequence belongs to the syntaxin family.

Its subcellular location is the membrane. Its function is as follows. Potentially involved in docking of synaptic vesicles at presynaptic active zones. The chain is Putative syntaxin-2 (syx-2) from Caenorhabditis elegans.